The primary structure comprises 161 residues: Nucleotide-binding protein Bphyt_3208 (161 aa).

This sequence belongs to the YajQ family.

In terms of biological role, nucleotide-binding protein. The protein is Nucleotide-binding protein Bphyt_3208 of Paraburkholderia phytofirmans (strain DSM 17436 / LMG 22146 / PsJN) (Burkholderia phytofirmans).